The sequence spans 474 residues: Adenylyl cyclase-associated protein 1 (474 aa).

Ala2 is modified (N-acetylalanine). At Tyr31 the chain carries Phosphotyrosine. Phosphoserine is present on Ser34. At Lys80 the chain carries N6-acetyllysine. Disordered stretches follow at residues Glu215–Arg253 and Met277–Lys316. Residues Ser217–Ser227 show a composition bias toward low complexity. A compositionally biased stretch (pro residues) spans Gly228–Ile241. Position 286 is an N6-methyllysine (Lys286). Ser289, Ser294, and Ser300 each carry phosphoserine. Residues Phe299–Lys311 show a composition bias toward pro residues. Thr306 carries the phosphothreonine modification. Phosphoserine occurs at positions 307 and 309. In terms of domain architecture, C-CAP/cofactor C-like spans Pro312–Val452. Lys347 participates in a covalent cross-link: Glycyl lysine isopeptide (Lys-Gly) (interchain with G-Cter in SUMO1).

Belongs to the CAP family. As to quaternary structure, homodimer. Binds actin monomers. In terms of tissue distribution, ubiquitous.

It localises to the cell membrane. Its function is as follows. Directly regulates filament dynamics and has been implicated in a number of complex developmental and morphological processes, including mRNA localization and the establishment of cell polarity. In Mus musculus (Mouse), this protein is Adenylyl cyclase-associated protein 1 (Cap1).